Reading from the N-terminus, the 212-residue chain is Ribonuclease HII (212 aa).

The RNase H type-2 domain occupies 28–212 (SLIAGIDEVG…KSFAPVRQVF (185 aa)). 3 residues coordinate a divalent metal cation: Asp-34, Glu-35, and Asp-127.

The protein belongs to the RNase HII family. Requires Mn(2+) as cofactor. The cofactor is Mg(2+).

It localises to the cytoplasm. The catalysed reaction is Endonucleolytic cleavage to 5'-phosphomonoester.. Endonuclease that specifically degrades the RNA of RNA-DNA hybrids. The chain is Ribonuclease HII from Chlamydia abortus (strain DSM 27085 / S26/3) (Chlamydophila abortus).